A 312-amino-acid polypeptide reads, in one-letter code: Malate dehydrogenase (312 aa).

NAD(+)-binding positions include 7–13 (GAAGGIG) and aspartate 34. 2 residues coordinate substrate: arginine 81 and arginine 87. NAD(+) is bound by residues asparagine 94 and 117 to 119 (ITN). 2 residues coordinate substrate: asparagine 119 and arginine 153. Catalysis depends on histidine 177, which acts as the Proton acceptor. An NAD(+)-binding site is contributed by methionine 227.

This sequence belongs to the LDH/MDH superfamily. MDH type 1 family. As to quaternary structure, homodimer.

The enzyme catalyses (S)-malate + NAD(+) = oxaloacetate + NADH + H(+). Its function is as follows. Catalyzes the reversible oxidation of malate to oxaloacetate. The protein is Malate dehydrogenase of Photobacterium profundum (strain SS9).